The sequence spans 100 residues: uncharacterized protein (100 aa).

This is an uncharacterized protein from Bacillus anthracis.